Here is a 143-residue protein sequence, read N- to C-terminus: Small ribosomal subunit protein eS19x (143 aa).

This sequence belongs to the eukaryotic ribosomal protein eS19 family.

This Arabidopsis thaliana (Mouse-ear cress) protein is Small ribosomal subunit protein eS19x (RPS19C).